Here is a 134-residue protein sequence, read N- to C-terminus: Large ribosomal subunit protein bL20 (134 aa).

This sequence belongs to the bacterial ribosomal protein bL20 family.

Its function is as follows. Binds directly to 23S ribosomal RNA and is necessary for the in vitro assembly process of the 50S ribosomal subunit. It is not involved in the protein synthesizing functions of that subunit. The sequence is that of Large ribosomal subunit protein bL20 from Rhizobium etli (strain CIAT 652).